The sequence spans 446 residues: Exodeoxyribonuclease 7 large subunit (446 aa).

This sequence belongs to the XseA family. As to quaternary structure, heterooligomer composed of large and small subunits.

The protein localises to the cytoplasm. The catalysed reaction is Exonucleolytic cleavage in either 5'- to 3'- or 3'- to 5'-direction to yield nucleoside 5'-phosphates.. In terms of biological role, bidirectionally degrades single-stranded DNA into large acid-insoluble oligonucleotides, which are then degraded further into small acid-soluble oligonucleotides. This chain is Exodeoxyribonuclease 7 large subunit, found in Ligilactobacillus salivarius (strain UCC118) (Lactobacillus salivarius).